We begin with the raw amino-acid sequence, 227 residues long: 4-nitrobenzoate reductase (227 aa).

Residue 15-19 (RRAVR) participates in FMN binding. NAD(+)-binding residues include Ser45, Tyr102, and Ile107. Arg213 contributes to the FMN binding site.

This sequence belongs to the nitroreductase family. It depends on FMN as a cofactor.

The catalysed reaction is 4-nitrobenzoate + 2 NADH + 2 H(+) = 4-hydroxylaminobenzoate + 2 NAD(+) + H2O. Its function is as follows. Nitroreductase involved in the degradation of nitroaromatic compounds. Catalyzes the conversion of 4-nitrobenzoate to 4-hydroxylaminobenzoate. Required for the catabolism of 4-nitrotoluene. This Pseudomonas putida (Arthrobacter siderocapsulatus) protein is 4-nitrobenzoate reductase.